A 172-amino-acid chain; its full sequence is Protein-export protein SecB (172 aa).

It belongs to the SecB family. Homotetramer, a dimer of dimers. One homotetramer interacts with 1 SecA dimer.

The protein resides in the cytoplasm. Functionally, one of the proteins required for the normal export of preproteins out of the cell cytoplasm. It is a molecular chaperone that binds to a subset of precursor proteins, maintaining them in a translocation-competent state. It also specifically binds to its receptor SecA. The chain is Protein-export protein SecB from Xylella fastidiosa (strain Temecula1 / ATCC 700964).